Consider the following 459-residue polypeptide: Cysteine--tRNA ligase (459 aa).

Residue cysteine 28 participates in Zn(2+) binding. The 'HIGH' region motif lies at 30–40; that stretch reads VTIYDLCHIGH. Zn(2+) contacts are provided by cysteine 209, histidine 234, and glutamate 238. The short motif at 266–270 is the 'KMSKS' region element; sequence KMSKS. Lysine 269 provides a ligand contact to ATP.

This sequence belongs to the class-I aminoacyl-tRNA synthetase family. Monomer. Zn(2+) is required as a cofactor.

It is found in the cytoplasm. It catalyses the reaction tRNA(Cys) + L-cysteine + ATP = L-cysteinyl-tRNA(Cys) + AMP + diphosphate. This chain is Cysteine--tRNA ligase, found in Shewanella amazonensis (strain ATCC BAA-1098 / SB2B).